The primary structure comprises 336 residues: Fructose-1,6-bisphosphatase class 1 (336 aa).

Mg(2+)-binding residues include Glu-92, Asp-115, Leu-117, and Asp-118. Substrate-binding positions include Asp-118–Ser-121, Asn-211, Tyr-244, Tyr-262–Tyr-264, and Lys-274. Position 280 (Glu-280) interacts with Mg(2+).

The protein belongs to the FBPase class 1 family. In terms of assembly, homotetramer. Requires Mg(2+) as cofactor.

The protein resides in the cytoplasm. The catalysed reaction is beta-D-fructose 1,6-bisphosphate + H2O = beta-D-fructose 6-phosphate + phosphate. It participates in carbohydrate biosynthesis; gluconeogenesis. This chain is Fructose-1,6-bisphosphatase class 1, found in Aliivibrio salmonicida (strain LFI1238) (Vibrio salmonicida (strain LFI1238)).